The primary structure comprises 96 residues: Aspartyl/glutamyl-tRNA(Asn/Gln) amidotransferase subunit C (96 aa).

This sequence belongs to the GatC family. Heterotrimer of A, B and C subunits.

It carries out the reaction L-glutamyl-tRNA(Gln) + L-glutamine + ATP + H2O = L-glutaminyl-tRNA(Gln) + L-glutamate + ADP + phosphate + H(+). It catalyses the reaction L-aspartyl-tRNA(Asn) + L-glutamine + ATP + H2O = L-asparaginyl-tRNA(Asn) + L-glutamate + ADP + phosphate + 2 H(+). In terms of biological role, allows the formation of correctly charged Asn-tRNA(Asn) or Gln-tRNA(Gln) through the transamidation of misacylated Asp-tRNA(Asn) or Glu-tRNA(Gln) in organisms which lack either or both of asparaginyl-tRNA or glutaminyl-tRNA synthetases. The reaction takes place in the presence of glutamine and ATP through an activated phospho-Asp-tRNA(Asn) or phospho-Glu-tRNA(Gln). This Geobacillus kaustophilus (strain HTA426) protein is Aspartyl/glutamyl-tRNA(Asn/Gln) amidotransferase subunit C.